Consider the following 273-residue polypeptide: Aliphatic sulfonates import ATP-binding protein SsuB 2 (273 aa).

The ABC transporter domain occupies 17–241; sequence LLDLRITRKL…PRDRRDPTLA (225 aa). ATP is bound at residue 50–57; sequence GPSGCGKS.

The protein belongs to the ABC transporter superfamily. Aliphatic sulfonates importer (TC 3.A.1.17.2) family. In terms of assembly, the complex is composed of two ATP-binding proteins (SsuB), two transmembrane proteins (SsuC) and a solute-binding protein (SsuA).

It localises to the cell inner membrane. It carries out the reaction ATP + H2O + aliphatic sulfonate-[sulfonate-binding protein]Side 1 = ADP + phosphate + aliphatic sulfonateSide 2 + [sulfonate-binding protein]Side 1.. Its function is as follows. Part of the ABC transporter complex SsuABC involved in aliphatic sulfonates import. Responsible for energy coupling to the transport system. This chain is Aliphatic sulfonates import ATP-binding protein SsuB 2, found in Burkholderia lata (strain ATCC 17760 / DSM 23089 / LMG 22485 / NCIMB 9086 / R18194 / 383).